Consider the following 72-residue polypeptide: V-type proton ATPase subunit e (72 aa).

Over M1–S2 the chain is Lumenal. A helical transmembrane segment spans residues F3–L23. The Cytoplasmic segment spans residues A24–S34. A helical transmembrane segment spans residues T35–L55. The Lumenal portion of the chain corresponds to H56–E72.

This sequence belongs to the V-ATPase e1/e2 subunit family. In terms of assembly, V-ATPase is a heteromultimeric enzyme composed of a peripheral catalytic V1 complex (components A to H) attached to an integral membrane V0 proton pore complex (components: a, c, c', c'', d, e, f and VOA1).

The protein localises to the vacuole membrane. In terms of biological role, subunit of the V0 complex of vacuolar(H+)-ATPase (V-ATPase), a multisubunit enzyme composed of a peripheral complex (V1) that hydrolyzes ATP and a membrane integral complex (V0) that translocates protons. V-ATPase is responsible for acidifying and maintaining the pH of intracellular compartments. The protein is V-type proton ATPase subunit e (VMA9) of Eremothecium gossypii (strain ATCC 10895 / CBS 109.51 / FGSC 9923 / NRRL Y-1056) (Yeast).